A 338-amino-acid chain; its full sequence is DNA-directed RNA polymerase subunit alpha (338 aa).

An alpha N-terminal domain (alpha-NTD) region spans residues 1 to 226 (MLIAQRPTLS…ELFGLARELN (226 aa)). The segment at 240–338 (DEQLAADLAL…DDAFVEDEQY (99 aa)) is alpha C-terminal domain (alpha-CTD).

Belongs to the RNA polymerase alpha chain family. In terms of assembly, homodimer. The RNAP catalytic core consists of 2 alpha, 1 beta, 1 beta' and 1 omega subunit. When a sigma factor is associated with the core the holoenzyme is formed, which can initiate transcription.

The enzyme catalyses RNA(n) + a ribonucleoside 5'-triphosphate = RNA(n+1) + diphosphate. In terms of biological role, DNA-dependent RNA polymerase catalyzes the transcription of DNA into RNA using the four ribonucleoside triphosphates as substrates. The protein is DNA-directed RNA polymerase subunit alpha of Nocardioides sp. (strain ATCC BAA-499 / JS614).